We begin with the raw amino-acid sequence, 110 residues long: Parvalbumin alpha (110 aa).

Ser2 carries the post-translational modification N-acetylserine. Phosphoserine is present on residues Ser2 and Ser24. EF-hand domains follow at residues 39–74 (KSAD…FSPD) and 78–110 (LSAK…VAES). Ca(2+) is bound by residues Asp52, Asp54, Ser56, Phe58, Glu60, Glu63, Asp91, Asp93, Asp95, Lys97, and Glu102.

This sequence belongs to the parvalbumin family.

Functionally, in muscle, parvalbumin is thought to be involved in relaxation after contraction. It binds two calcium ions. This is Parvalbumin alpha (PVALB) from Macaca fuscata fuscata (Japanese macaque).